Here is a 600-residue protein sequence, read N- to C-terminus: ATP-dependent ubiquitin transferase-like protein Cap2 (600 aa).

An E2-like domain region spans residues 1-158; the sequence is MSTVVQQVPA…QEKLATTGDA (158 aa). Catalysis depends on Cys-109, which acts as the For E2-like domain. Residues 159–373 are linker domain; sequence VELPAFPDQS…DQLRTRGEAA (215 aa). The tract at residues 375-600 is adenylation plus E1-like domain; the sequence is DIRSKKVLII…GTVEKEPHEY (226 aa). Cys-548 functions as the For E1-like domain in the catalytic mechanism.

It in the C-terminal section; belongs to the HesA/MoeB/ThiF family. In terms of assembly, crystallizes as a Cap2 homodimer bound on each side by a CdnD monomer.

Its function is as follows. CD-NTase priming component of a CBASS antiviral system. CBASS (cyclic oligonucleotide-based antiphage signaling system) provides immunity against bacteriophages. The CD-NTase protein (CdnD) synthesizes cyclic nucleotides in response to infection; these serve as specific second messenger signals. The signals activate a diverse range of effectors, leading to bacterial cell death and thus abortive phage infection. A type II-C(AAG) CBASS system. In terms of biological role, primes CdnD; acts as a protein transferase, conjugating CdnD, the CD-NTase, to unidentified target(s) in the cell via an E1-E2 ubiquitin transferase-like mechanism. Upon phage infection CdnD activates and makes cyclic nucleotides. During the conjugation reaction CdnD is transiently attached to AMP. Protein conjugation requires ATP. Protects E.coli against phage T2 infection. When the cdnD-cap2-cap3-cap4 operon is introduced in E.coli there is a more than 10(3) decrease in the efficiency of T2 plaque formation. The operon does not protect against phage T5 and only about 10-fold against T7. This Enterobacter hormaechei subsp. hoffmannii (strain UCI 50) protein is ATP-dependent ubiquitin transferase-like protein Cap2.